The primary structure comprises 572 residues: Urease subunit alpha (572 aa).

The Urease domain maps to G133–F572. 3 residues coordinate Ni(2+): H138, H140, and K221. K221 is modified (N6-carboxylysine). H223 contributes to the substrate binding site. Positions 250 and 276 each coordinate Ni(2+). Catalysis depends on H324, which acts as the Proton donor. D364 contacts Ni(2+).

Belongs to the metallo-dependent hydrolases superfamily. Urease alpha subunit family. In terms of assembly, heterotrimer of UreA (gamma), UreB (beta) and UreC (alpha) subunits. Three heterotrimers associate to form the active enzyme. Requires Ni cation as cofactor. Post-translationally, carboxylation allows a single lysine to coordinate two nickel ions.

The protein localises to the cytoplasm. It catalyses the reaction urea + 2 H2O + H(+) = hydrogencarbonate + 2 NH4(+). Its pathway is nitrogen metabolism; urea degradation; CO(2) and NH(3) from urea (urease route): step 1/1. In terms of biological role, ureolysis may allow urea to be employed as a nitrogen source for growth and produces ammonia which may protect from killing at low pH. In Streptococcus salivarius (strain 57.I), this protein is Urease subunit alpha.